The following is a 461-amino-acid chain: Early growth response factor homolog 1 (461 aa).

3 disordered regions span residues Met-1–Asn-25, Thr-96–Leu-152, and Asp-232–Leu-308. Composition is skewed to polar residues over residues Thr-96–Tyr-105, Gly-129–Lys-144, Leu-249–Ser-265, and Gln-272–Pro-291. The segment covering Tyr-299–Leu-308 has biased composition (low complexity). 3 consecutive C2H2-type zinc fingers follow at residues Tyr-374–His-398, Phe-404–His-426, and Phe-432–His-454.

This sequence belongs to the EGR C2H2-type zinc-finger protein family. As to expression, expressed in sheath cells and distal tip cells of the somatic gonad, as well as in the intestine and sperm (at protein level). Expression not observed in oocytes (at protein level).

The protein localises to the nucleus. Its subcellular location is the cytoplasm. It localises to the perinuclear region. Its function is as follows. Sequence-specific DNA-binding transcription factor. Plays a role in oocyte development, acting cell-autonomously in the somatic gonad. Involved in negative regulation of oocyte MAPK activation and inhibits oocyte maturation and ovulation. This chain is Early growth response factor homolog 1, found in Caenorhabditis elegans.